The chain runs to 240 residues: 2-C-methyl-D-erythritol 4-phosphate cytidylyltransferase (240 aa).

This sequence belongs to the IspD/TarI cytidylyltransferase family. IspD subfamily.

The enzyme catalyses 2-C-methyl-D-erythritol 4-phosphate + CTP + H(+) = 4-CDP-2-C-methyl-D-erythritol + diphosphate. The protein operates within isoprenoid biosynthesis; isopentenyl diphosphate biosynthesis via DXP pathway; isopentenyl diphosphate from 1-deoxy-D-xylulose 5-phosphate: step 2/6. Its function is as follows. Catalyzes the formation of 4-diphosphocytidyl-2-C-methyl-D-erythritol from CTP and 2-C-methyl-D-erythritol 4-phosphate (MEP). This Chlorobium luteolum (strain DSM 273 / BCRC 81028 / 2530) (Pelodictyon luteolum) protein is 2-C-methyl-D-erythritol 4-phosphate cytidylyltransferase.